The chain runs to 417 residues: NADH-quinone oxidoreductase subunit D (417 aa).

Belongs to the complex I 49 kDa subunit family. NDH-1 is composed of 14 different subunits. Subunits NuoB, C, D, E, F, and G constitute the peripheral sector of the complex.

Its subcellular location is the cell inner membrane. The enzyme catalyses a quinone + NADH + 5 H(+)(in) = a quinol + NAD(+) + 4 H(+)(out). Functionally, NDH-1 shuttles electrons from NADH, via FMN and iron-sulfur (Fe-S) centers, to quinones in the respiratory chain. The immediate electron acceptor for the enzyme in this species is believed to be ubiquinone. Couples the redox reaction to proton translocation (for every two electrons transferred, four hydrogen ions are translocated across the cytoplasmic membrane), and thus conserves the redox energy in a proton gradient. In Albidiferax ferrireducens (strain ATCC BAA-621 / DSM 15236 / T118) (Rhodoferax ferrireducens), this protein is NADH-quinone oxidoreductase subunit D.